The chain runs to 258 residues: Regulatory protein RecX (258 aa).

This sequence belongs to the RecX family.

Its subcellular location is the cytoplasm. In terms of biological role, modulates RecA activity. This chain is Regulatory protein RecX, found in Streptococcus pyogenes serotype M12 (strain MGAS2096).